A 365-amino-acid polypeptide reads, in one-letter code: GTPase Obg (365 aa).

The 159-residue stretch at 1-159 folds into the Obg domain; that stretch reads MKFIDEARIE…RMLKLELKVL (159 aa). One can recognise an OBG-type G domain in the interval 160–334; the sequence is ADVGLLGMPN…LVYAIKDHLA (175 aa). Residues 166-173, 191-195, 213-216, 284-287, and 315-317 contribute to the GTP site; these read GMPNAGKS, FTTLH, DIPG, NKLD, and SAL. 2 residues coordinate Mg(2+): Ser173 and Thr193.

This sequence belongs to the TRAFAC class OBG-HflX-like GTPase superfamily. OBG GTPase family. As to quaternary structure, monomer. The cofactor is Mg(2+).

It is found in the cytoplasm. In terms of biological role, an essential GTPase which binds GTP, GDP and possibly (p)ppGpp with moderate affinity, with high nucleotide exchange rates and a fairly low GTP hydrolysis rate. Plays a role in control of the cell cycle, stress response, ribosome biogenesis and in those bacteria that undergo differentiation, in morphogenesis control. The protein is GTPase Obg of Cupriavidus metallidurans (strain ATCC 43123 / DSM 2839 / NBRC 102507 / CH34) (Ralstonia metallidurans).